The chain runs to 91 residues: Small ribosomal subunit protein bS18 (91 aa).

This sequence belongs to the bacterial ribosomal protein bS18 family. In terms of assembly, part of the 30S ribosomal subunit. Forms a tight heterodimer with protein bS6.

Its function is as follows. Binds as a heterodimer with protein bS6 to the central domain of the 16S rRNA, where it helps stabilize the platform of the 30S subunit. This chain is Small ribosomal subunit protein bS18, found in Paraburkholderia xenovorans (strain LB400).